The following is a 125-amino-acid chain: MEKKKLPFGLKNKEKLTAYNDEKIHELHRQLKAKIEAKKAKEKQDSKTKDTDKKVDQTPKVKVPFTKKFSNLWFGIDKEVNKIVWVTSKKLITIFLLIVLVSAIMIGIYFGINHLFIALGVFKGK.

A disordered region spans residues 36–57 (EAKKAKEKQDSKTKDTDKKVDQ). The helical transmembrane segment at 92–112 (ITIFLLIVLVSAIMIGIYFGI) threads the bilayer.

The protein resides in the membrane. This is an uncharacterized protein from Mycoplasma pneumoniae (strain ATCC 29342 / M129 / Subtype 1) (Mycoplasmoides pneumoniae).